We begin with the raw amino-acid sequence, 456 residues long: Bifunctional protein GlmU (456 aa).

A pyrophosphorylase region spans residues 1–228 (MPQNTLNIVI…SHLAAGVNNK (228 aa)). Residues 11–14 (LAAG), K25, Q75, 80–81 (GT), 102–104 (YGD), G138, E153, N168, and N226 each bind UDP-N-acetyl-alpha-D-glucosamine. D104 serves as a coordination point for Mg(2+). N226 provides a ligand contact to Mg(2+). Positions 229 to 249 (LQLAELERIFQTEQAQELLKA) are linker. The segment at 250-456 (GVTLRDPARF…GWVRPEKNKQ (207 aa)) is N-acetyltransferase. Residues R332 and K350 each coordinate UDP-N-acetyl-alpha-D-glucosamine. Catalysis depends on H362, which acts as the Proton acceptor. UDP-N-acetyl-alpha-D-glucosamine is bound by residues Y365 and N376. Residues A379, 385-386 (NY), S404, A422, and R439 contribute to the acetyl-CoA site.

It in the N-terminal section; belongs to the N-acetylglucosamine-1-phosphate uridyltransferase family. This sequence in the C-terminal section; belongs to the transferase hexapeptide repeat family. As to quaternary structure, homotrimer. Mg(2+) is required as a cofactor.

The protein localises to the cytoplasm. It catalyses the reaction alpha-D-glucosamine 1-phosphate + acetyl-CoA = N-acetyl-alpha-D-glucosamine 1-phosphate + CoA + H(+). The enzyme catalyses N-acetyl-alpha-D-glucosamine 1-phosphate + UTP + H(+) = UDP-N-acetyl-alpha-D-glucosamine + diphosphate. It participates in nucleotide-sugar biosynthesis; UDP-N-acetyl-alpha-D-glucosamine biosynthesis; N-acetyl-alpha-D-glucosamine 1-phosphate from alpha-D-glucosamine 6-phosphate (route II): step 2/2. It functions in the pathway nucleotide-sugar biosynthesis; UDP-N-acetyl-alpha-D-glucosamine biosynthesis; UDP-N-acetyl-alpha-D-glucosamine from N-acetyl-alpha-D-glucosamine 1-phosphate: step 1/1. Its pathway is bacterial outer membrane biogenesis; LPS lipid A biosynthesis. Its function is as follows. Catalyzes the last two sequential reactions in the de novo biosynthetic pathway for UDP-N-acetylglucosamine (UDP-GlcNAc). The C-terminal domain catalyzes the transfer of acetyl group from acetyl coenzyme A to glucosamine-1-phosphate (GlcN-1-P) to produce N-acetylglucosamine-1-phosphate (GlcNAc-1-P), which is converted into UDP-GlcNAc by the transfer of uridine 5-monophosphate (from uridine 5-triphosphate), a reaction catalyzed by the N-terminal domain. This chain is Bifunctional protein GlmU, found in Neisseria meningitidis serogroup A / serotype 4A (strain DSM 15465 / Z2491).